The following is a 116-amino-acid chain: U16-barytoxin-Tl1a (116 aa).

A signal peptide spans 1–20 (MKTIIVFLSLLVLATKFGDA). A propeptide spanning residues 21–74 (KEGVNQEQKKEVTQNEFRVEYLNEMAAMSLLQQLEAIESALFEKEAGRNSRQKR) is cleaved from the precursor. 3 disulfides stabilise this stretch: Cys75–Cys90, Cys82–Cys95, and Cys89–Cys110.

It belongs to the neurotoxin 14 (magi-1) family. 06 (ICK-Trit) subfamily. Expressed by the venom gland.

The protein localises to the secreted. Functionally, ion channel inhibitor. This is U16-barytoxin-Tl1a from Trittame loki (Brush-footed trapdoor spider).